A 120-amino-acid polypeptide reads, in one-letter code: Non-specific lipid-transfer protein 6 (120 aa).

An N-terminal signal peptide occupies residues 1–26 (MARSMSLKLACVVVLCLLVDAPLAQG). 2 cysteine pairs are disulfide-bonded: Cys-57/Cys-102 and Cys-77/Cys-116.

Belongs to the plant LTP family. In terms of tissue distribution, specifically expressed in fiber cells.

Functionally, plant non-specific lipid-transfer proteins transfer phospholipids as well as galactolipids across membranes. May play a role in wax or cutin deposition in the cell walls of expanding epidermal cells and certain secretory tissues. This Gossypium hirsutum (Upland cotton) protein is Non-specific lipid-transfer protein 6 (LTP6).